A 718-amino-acid polypeptide reads, in one-letter code: Quinolinate synthase, chloroplastic (718 aa).

Positions 1 to 22 (MALALSVAPTSSSLSSLLSRTP) are enriched in low complexity. The interval 1-29 (MALALSVAPTSSSLSSLLSRTPNPSPNFR) is disordered. The transit peptide at 1 to 70 (MALALSVAPT…VNASPFSISA (70 aa)) directs the protein to the chloroplast. Catalysis depends on Cys-132, which acts as the Cysteine persulfide intermediate. Iminosuccinate contacts are provided by His-280 and Ser-306. A [4Fe-4S] cluster-binding site is contributed by Cys-360. Residues 389 to 391 (YIN) and Ser-411 contribute to the iminosuccinate site. Cys-484 provides a ligand contact to [4Fe-4S] cluster. Iminosuccinate is bound by residues 510–512 (HLE) and Thr-535. A [4Fe-4S] cluster-binding site is contributed by Cys-640.

It belongs to the quinolinate synthase family. Type 1 subfamily. As to quaternary structure, homodimer. Interacts in vitro with NFS2, CpNIFS3 and AO. Part of a Cys defulfurase complex. Requires [4Fe-4S] cluster as cofactor. As to expression, expressed in roots, leaves, stems and flowers.

The protein localises to the plastid. It localises to the chloroplast. It carries out the reaction iminosuccinate + dihydroxyacetone phosphate = quinolinate + phosphate + 2 H2O + H(+). It participates in cofactor biosynthesis; NAD(+) biosynthesis; quinolinate from iminoaspartate: step 1/1. In terms of biological role, catalyzes the condensation of iminoaspartate with dihydroxyacetone phosphate to form quinolinate. Can complement nadA-deficient E.coli mutant. Essential for the de novo synthesis of NAD. Also participates in cysteine desulfurization mediated by NFS2. Can activate the cysteine desulfurase activity of NFS2 in vitro. This Arabidopsis thaliana (Mouse-ear cress) protein is Quinolinate synthase, chloroplastic.